Reading from the N-terminus, the 320-residue chain is Olfactory receptor 5C1 (320 aa).

Residues 1-29 (MNSENLTRAAVAPAEFVLLGITNRWDLRV) are Extracellular-facing. Residue asparagine 5 is glycosylated (N-linked (GlcNAc...) asparagine). The chain crosses the membrane as a helical span at residues 30–50 (ALFLTCLPVYLVSLLGNMGMA). Over 51-58 (LLIRMDAR) the chain is Cytoplasmic. The chain crosses the membrane as a helical span at residues 59 to 79 (LHTPMYFFLANLSLLDACYSS). At 80 to 103 (AIGPKMLVDLLLPRATIPYTACAL) the chain is on the extracellular side. Cysteine 101 and cysteine 193 are joined by a disulfide. A helical membrane pass occupies residues 104 to 124 (QMFVFAGLADTECCLLAAMAY). At 125 to 143 (DRYVAIRNPLLYTTAMSQR) the chain is on the cytoplasmic side. Residues 144-164 (LCLALLGASGLGGAVSAFVHT) traverse the membrane as a helical segment. Over 165 to 200 (TLTFRLSFCRSRKINSFFCDIPPLLAISCSDTSLNE) the chain is Extracellular. A helical transmembrane segment spans residues 201–221 (LLLFAICGFIQTATVLAITVS). The Cytoplasmic portion of the chain corresponds to 222 to 241 (YGFIAGAVIHMRSVEGSRRA). Residues 242–262 (ASTGGSHLTAVAMMYGTLIFM) traverse the membrane as a helical segment. The Extracellular portion of the chain corresponds to 263-275 (YLRPSSSYALDTD). Residues 276–296 (KMASVFYTLVIPSLNPLIYSL) form a helical membrane-spanning segment. Residues 297–320 (RNKEVKEALRQTWSRFHCPGQGSQ) lie on the Cytoplasmic side of the membrane.

Belongs to the G-protein coupled receptor 1 family.

The protein localises to the cell membrane. Functionally, odorant receptor. In Homo sapiens (Human), this protein is Olfactory receptor 5C1 (OR5C1).